The primary structure comprises 382 residues: Galactokinase (382 aa).

34-37 contributes to the substrate binding site; it reads EHTD. 124–130 contributes to the ATP binding site; the sequence is GAGLSSS. 2 residues coordinate Mg(2+): Ser-130 and Glu-162. Asp-174 (proton acceptor) is an active-site residue. Tyr-223 contacts substrate.

It belongs to the GHMP kinase family. GalK subfamily.

The protein localises to the cytoplasm. It catalyses the reaction alpha-D-galactose + ATP = alpha-D-galactose 1-phosphate + ADP + H(+). It functions in the pathway carbohydrate metabolism; galactose metabolism. Its function is as follows. Catalyzes the transfer of the gamma-phosphate of ATP to D-galactose to form alpha-D-galactose-1-phosphate (Gal-1-P). The chain is Galactokinase from Escherichia fergusonii (strain ATCC 35469 / DSM 13698 / CCUG 18766 / IAM 14443 / JCM 21226 / LMG 7866 / NBRC 102419 / NCTC 12128 / CDC 0568-73).